A 1337-amino-acid polypeptide reads, in one-letter code: uncharacterized protein (1337 aa).

Disordered stretches follow at residues methionine 1–alanine 94 and alanine 119–phenylalanine 174. 2 stretches are compositionally biased toward low complexity: residues serine 18–serine 37 and serine 68–serine 79. Positions asparagine 80 to alanine 94 are enriched in polar residues. Over residues proline 123–serine 147 the composition is skewed to low complexity. The span at asparagine 157 to proline 167 shows a compositional bias: basic and acidic residues. 6 helical membrane passes run glycine 209–alanine 229, phenylalanine 241–tryptophan 261, phenylalanine 267–alanine 287, valine 328–isoleucine 348, cysteine 361–phenylalanine 381, and leucine 387–isoleucine 407. Disordered stretches follow at residues serine 623–serine 662 and tyrosine 868–histidine 894. Positions arginine 626 to lysine 644 are enriched in polar residues. The segment covering tyrosine 868–methionine 880 has biased composition (basic and acidic residues). The next 6 helical transmembrane spans lie at methionine 917–cysteine 937, isoleucine 975–histidine 995, leucine 997–isoleucine 1017, phenylalanine 1021–threonine 1041, phenylalanine 1066–arginine 1086, and phenylalanine 1275–isoleucine 1295.

The protein localises to the membrane. This is an uncharacterized protein from Schizosaccharomyces pombe (strain 972 / ATCC 24843) (Fission yeast).